The primary structure comprises 158 residues: UPF0262 protein R00612 (158 aa).

The protein belongs to the UPF0262 family.

This is UPF0262 protein R00612 from Rhizobium meliloti (strain 1021) (Ensifer meliloti).